Consider the following 385-residue polypeptide: Cytochrome b (385 aa).

The next 4 membrane-spanning stretches (helical) occupy residues 32 to 52 (FGSL…TLAM), 76 to 98 (WLVR…LHIG), 113 to 133 (TWAI…LGYV), and 179 to 199 (FFAL…MHLI). Residues His82 and His96 each coordinate heme b. Heme b-binding residues include His183 and His197. His202 provides a ligand contact to a ubiquinone. Helical transmembrane passes span 226 to 246 (FIFK…IFVF), 290 to 310 (LLGV…PITD), 322 to 342 (LSKV…QIGA), and 349 to 369 (FIEL…VIVP).

It belongs to the cytochrome b family. As to quaternary structure, fungal cytochrome b-c1 complex contains 10 subunits; 3 respiratory subunits, 2 core proteins and 5 low-molecular weight proteins. Cytochrome b-c1 complex is a homodimer. It depends on heme b as a cofactor.

Its subcellular location is the mitochondrion inner membrane. Its function is as follows. Component of the ubiquinol-cytochrome c reductase complex (complex III or cytochrome b-c1 complex) that is part of the mitochondrial respiratory chain. The b-c1 complex mediates electron transfer from ubiquinol to cytochrome c. Contributes to the generation of a proton gradient across the mitochondrial membrane that is then used for ATP synthesis. This is Cytochrome b (cob) from Aspergillus tubingensis.